Consider the following 108-residue polypeptide: Protein SMALL AUXIN UP-REGULATED RNA 8 (108 aa).

This sequence belongs to the ARG7 family. As to expression, expressed in seedlings, leaves and flowers.

The protein resides in the cell membrane. In terms of biological role, provide a mechanistic link between auxin and plasma membrane H(+)-ATPases (PM H(+)-ATPases, e.g. AHA1 and AHA2), and triggers PM H(+)-ATPases activity by promoting phosphorylation of their C-terminal autoinhibitory domain as a result of PP2C-D subfamily of type 2C phosphatases inhibition, thus leading to the acidification of the apoplast and the facilitation of solutes and water uptake to drive cell expansion. Triggers plant growth probably by promoting cell elongation. Regulates branch angles and bending. The polypeptide is Protein SMALL AUXIN UP-REGULATED RNA 8 (Arabidopsis thaliana (Mouse-ear cress)).